A 353-amino-acid chain; its full sequence is UDP-N-acetylglucosamine--N-acetylmuramyl-(pentapeptide) pyrophosphoryl-undecaprenol N-acetylglucosamine transferase (353 aa).

UDP-N-acetyl-alpha-D-glucosamine-binding positions include 15–17 (TGG), N125, R165, S186, and Q286.

It belongs to the glycosyltransferase 28 family. MurG subfamily.

The protein localises to the cell inner membrane. The catalysed reaction is di-trans,octa-cis-undecaprenyl diphospho-N-acetyl-alpha-D-muramoyl-L-alanyl-D-glutamyl-meso-2,6-diaminopimeloyl-D-alanyl-D-alanine + UDP-N-acetyl-alpha-D-glucosamine = di-trans,octa-cis-undecaprenyl diphospho-[N-acetyl-alpha-D-glucosaminyl-(1-&gt;4)]-N-acetyl-alpha-D-muramoyl-L-alanyl-D-glutamyl-meso-2,6-diaminopimeloyl-D-alanyl-D-alanine + UDP + H(+). Its pathway is cell wall biogenesis; peptidoglycan biosynthesis. Cell wall formation. Catalyzes the transfer of a GlcNAc subunit on undecaprenyl-pyrophosphoryl-MurNAc-pentapeptide (lipid intermediate I) to form undecaprenyl-pyrophosphoryl-MurNAc-(pentapeptide)GlcNAc (lipid intermediate II). In Chlamydia muridarum (strain MoPn / Nigg), this protein is UDP-N-acetylglucosamine--N-acetylmuramyl-(pentapeptide) pyrophosphoryl-undecaprenol N-acetylglucosamine transferase.